We begin with the raw amino-acid sequence, 244 residues long: Protein-L-isoaspartate O-methyltransferase 2 (244 aa).

Serine 88 is an active-site residue.

The protein belongs to the methyltransferase superfamily. L-isoaspartyl/D-aspartyl protein methyltransferase family.

The protein resides in the cytoplasm. It carries out the reaction [protein]-L-isoaspartate + S-adenosyl-L-methionine = [protein]-L-isoaspartate alpha-methyl ester + S-adenosyl-L-homocysteine. Functionally, catalyzes the methyl esterification of L-isoaspartyl residues in peptides and proteins that result from spontaneous decomposition of normal L-aspartyl and L-asparaginyl residues. It plays a role in the repair and/or degradation of damaged proteins. The polypeptide is Protein-L-isoaspartate O-methyltransferase 2 (Shewanella sediminis (strain HAW-EB3)).